Reading from the N-terminus, the 308-residue chain is UPF0282 protein STK_23220 (308 aa).

The protein belongs to the UPF0282 family.

In Sulfurisphaera tokodaii (strain DSM 16993 / JCM 10545 / NBRC 100140 / 7) (Sulfolobus tokodaii), this protein is UPF0282 protein STK_23220.